We begin with the raw amino-acid sequence, 200 residues long: Ras-related protein RABF2b (200 aa).

17–25 (GDVGAGKSS) is a GTP binding site. The Effector region signature appears at 39–47 (QESTIGAAF). GTP-binding positions include 65 to 69 (DTAGQ), 123 to 126 (NKSD), and 153 to 154 (SA). 2 S-geranylgeranyl cysteine lipidation sites follow: Cys-198 and Cys-199.

This sequence belongs to the small GTPase superfamily. Rab family. Interacts with VPS9A homodimer. Interacts with TCTP1. Interacts with MON1. Interacts with EREX (via PX domain). Binds to VPS3. Expressed in roots and actively dividing cells.

Its subcellular location is the early endosome membrane. The protein localises to the endosome membrane. It localises to the prevacuolar compartment membrane. It is found in the endosome. The protein resides in the multivesicular body membrane. Its subcellular location is the cell membrane. The protein localises to the cytoplasm. With respect to regulation, regulated by guanine nucleotide exchange factors (GEFs) which promote the exchange of bound GDP for free GTP. In terms of biological role, endosomal protein that may be involved in endocytosis. Involved in the trafficking of proteins from prevacuolar compartments (PVCs) to vacuoles. May activate the MON1-CCZ1 complex which acts as guanine nucleotide exchange factors (GEF) for Rab7 protein family, and serves as a link between Rab5 and Rab7 families in PVCs, and mediates PVC maturation. Involved in vacuolar transport of storage proteins with EREX as effector. Regulates membrane trafficking to protein storage vacuoles (PSVs). This Arabidopsis thaliana (Mouse-ear cress) protein is Ras-related protein RABF2b.